The primary structure comprises 432 residues: D-amino acid dehydrogenase (432 aa).

Residue 3 to 17 (VVVLGSGVVGVASAW) coordinates FAD.

Belongs to the DadA oxidoreductase family. It depends on FAD as a cofactor.

It carries out the reaction a D-alpha-amino acid + A + H2O = a 2-oxocarboxylate + AH2 + NH4(+). It functions in the pathway amino-acid degradation; D-alanine degradation; NH(3) and pyruvate from D-alanine: step 1/1. Functionally, oxidative deamination of D-amino acids. This chain is D-amino acid dehydrogenase, found in Cronobacter sakazakii (strain ATCC BAA-894) (Enterobacter sakazakii).